The primary structure comprises 25 residues: C-reactive protein P2 subunit 4 (25 aa).

A Pentraxin (PTX) domain is found at 1 to 25; the sequence is GRSLVFPEETANSFVELFPAKELSL.

This sequence belongs to the pentraxin family. In terms of assembly, heteropentamer. Discoid arrangement of 5 non-covalently bound subunits 1, 2, 3 and 4. The cofactor is Ca(2+). Post-translationally, glycosylated.

Its subcellular location is the secreted. Displays several functions associated with host defense: it promotes agglutination, bacterial capsular swelling, phagocytosis, and complement fixation through its calcium-dependent binding to phosphorylcholine. This is C-reactive protein P2 subunit 4 from Gadus morhua (Atlantic cod).